A 761-amino-acid polypeptide reads, in one-letter code: Xaa-Pro dipeptidyl-peptidase (761 aa).

Catalysis depends on charge relay system residues Ser349, Asp469, and His499.

The protein belongs to the peptidase S15 family. Homodimer.

It localises to the cytoplasm. It carries out the reaction Hydrolyzes Xaa-Pro-|- bonds to release unblocked, N-terminal dipeptides from substrates including Ala-Pro-|-p-nitroanilide and (sequentially) Tyr-Pro-|-Phe-Pro-|-Gly-Pro-|-Ile.. Its function is as follows. Removes N-terminal dipeptides sequentially from polypeptides having unsubstituted N-termini provided that the penultimate residue is proline. This Streptococcus equi subsp. zooepidemicus (strain H70) protein is Xaa-Pro dipeptidyl-peptidase.